The chain runs to 213 residues: Ion-translocating oxidoreductase complex subunit A (213 aa).

Residues 1 to 24 (MLLLWQSRIMPGSEANIYITMTEY) are Periplasmic-facing. Residues 25-45 (LLLLIGTVLVNNFVLVKFLGL) form a helical membrane-spanning segment. The Cytoplasmic portion of the chain corresponds to 46–58 (CPFMGVSKKLETA). Residues 59–79 (IGMGLATTFVLTLASVCAYLV) traverse the membrane as a helical segment. The Periplasmic portion of the chain corresponds to 80–86 (ESYVLRP). The helical transmembrane segment at 87–107 (LGIEYLRTMSFILVIAVVVQF) threads the bilayer. The Cytoplasmic portion of the chain corresponds to 108–121 (TEMVVHKTSPTLYR). Residues 122-142 (LLGIFLPLITTNCAVLGVALL) traverse the membrane as a helical segment. Residues 143–153 (NINENHNFIQS) lie on the Periplasmic side of the membrane. The helical transmembrane segment at 154 to 174 (IIYGFGAAVGFSLVLILFASM) threads the bilayer. The Cytoplasmic segment spans residues 175-190 (RERIHVADVPAPFKGA). Residues 191-211 (SIAMITAGLMSLAFMGFTGLV) traverse the membrane as a helical segment. Topologically, residues 212 to 213 (KL) are periplasmic.

This sequence belongs to the NqrDE/RnfAE family. In terms of assembly, the complex is composed of six subunits: RnfA, RnfB, RnfC, RnfD, RnfE and RnfG.

It is found in the cell inner membrane. Its function is as follows. Part of a membrane-bound complex that couples electron transfer with translocation of ions across the membrane. The chain is Ion-translocating oxidoreductase complex subunit A from Vibrio cholerae serotype O1 (strain ATCC 39541 / Classical Ogawa 395 / O395).